The primary structure comprises 524 residues: Thioredoxin reductase 2, mitochondrial (524 aa).

A mitochondrion-targeting transit peptide spans 1–36; it reads MAAMAVALRGLGGRFRWRTQAVAGGVRGAARGAAAG. 41–70 is an FAD binding site; it reads DLLVVGGGSGGLACAKEAAQLGRKVAVVDY. Cysteines 86 and 91 form a disulfide. An N6-succinyllysine mark is found at Lys-175 and Lys-329. The active-site Proton acceptor is His-497. The segment at residues 522–523 is a cross-link (cysteinyl-selenocysteine (Cys-Sec)); the sequence is CU. Residue Sec-523 is a non-standard amino acid, selenocysteine.

It belongs to the class-I pyridine nucleotide-disulfide oxidoreductase family. As to quaternary structure, homodimer. It depends on FAD as a cofactor. In terms of tissue distribution, highly expressed in the prostate, ovary, liver, testis, uterus, colon and small intestine. Intermediate levels in brain, skeletal muscle, heart and spleen. Low levels in placenta, pancreas, thymus and peripheral blood leukocytes. According to PubMed:10608886, high levels in kidney, whereas according to PubMed:9923614, levels are low. High expression is observed in the adrenal cortex.

The protein localises to the mitochondrion. It catalyses the reaction [thioredoxin]-dithiol + NADP(+) = [thioredoxin]-disulfide + NADPH + H(+). Functionally, involved in the control of reactive oxygen species levels and the regulation of mitochondrial redox homeostasis. Maintains thioredoxin in a reduced state. May play a role in redox-regulated cell signaling. The sequence is that of Thioredoxin reductase 2, mitochondrial from Homo sapiens (Human).